The following is a 558-amino-acid chain: Alpha-1,3-mannosyltransferase MNT2 (558 aa).

Over 1 to 6 the chain is Cytoplasmic; sequence MRRKNR. The helical; Signal-anchor for type II membrane protein transmembrane segment at 7–27 threads the bilayer; that stretch reads LFILVVLLGIVLVVYYSQLNS. Residues 28–558 lie on the Lumenal side of the membrane; the sequence is LDLVEPVQSS…QIVDIWNKDI (531 aa). The N-linked (GlcNAc...) asparagine glycan is linked to Asn-187.

The protein belongs to the MNN1/MNT family.

It is found in the golgi apparatus membrane. The protein operates within protein modification; protein glycosylation. Functionally, mannosyltransferase involved in adding the 4th and 5th mannose residues of O-linked glycans. The polypeptide is Alpha-1,3-mannosyltransferase MNT2 (MNT2) (Saccharomyces cerevisiae (strain ATCC 204508 / S288c) (Baker's yeast)).